Here is a 64-residue protein sequence, read N- to C-terminus: Small ribosomal subunit protein eS17 (64 aa).

The protein belongs to the eukaryotic ribosomal protein eS17 family.

In Halorubrum lacusprofundi (strain ATCC 49239 / DSM 5036 / JCM 8891 / ACAM 34), this protein is Small ribosomal subunit protein eS17.